Reading from the N-terminus, the 141-residue chain is uncharacterized protein (141 aa).

Residues 13 to 35 traverse the membrane as a helical segment; it reads PVIGVILMVAITVILAAVIASFV.

The protein localises to the membrane. This is an uncharacterized protein from Archaeoglobus fulgidus (strain ATCC 49558 / DSM 4304 / JCM 9628 / NBRC 100126 / VC-16).